The primary structure comprises 169 residues: 16S rRNA aminocarboxypropyltransferase (169 aa).

The S-adenosyl-L-methionine site is built by Thr17, Leu67, Leu90, and Thr109.

This sequence belongs to the TDD superfamily. TSR3 family.

The protein localises to the cytoplasm. It catalyses the reaction an N(1)-methylpseudouridine in rRNA + S-adenosyl-L-methionine = N(1)-methyl-N(3)-[(3S)-3-amino-3-carboxypropyl]pseudouridine in rRNA + S-methyl-5'-thioadenosine + H(+). In terms of biological role, aminocarboxypropyltransferase that catalyzes the aminocarboxypropyl transfer on pseudouridine corresponding to position 914 in M.jannaschii 16S rRNA. It constitutes the last step in biosynthesis of the hypermodified N1-methyl-N3-(3-amino-3-carboxypropyl) pseudouridine (m1acp3-Psi). The polypeptide is 16S rRNA aminocarboxypropyltransferase (Methanothermobacter thermautotrophicus (strain ATCC 29096 / DSM 1053 / JCM 10044 / NBRC 100330 / Delta H) (Methanobacterium thermoautotrophicum)).